Here is a 66-residue protein sequence, read N- to C-terminus: Large ribosomal subunit protein eL24 (66 aa).

Residues C6, C9, C32, and C36 each contribute to the Zn(2+) site. The C4-type zinc-finger motif lies at 6 to 36; sequence CSFCGKTIEPGTGIMYVRKDGAILYFCSNKC.

It belongs to the eukaryotic ribosomal protein eL24 family. Part of the 50S ribosomal subunit. Forms a cluster with proteins L3 and L14. It depends on Zn(2+) as a cofactor.

Functionally, binds to the 23S rRNA. The sequence is that of Large ribosomal subunit protein eL24 from Thermoplasma volcanium (strain ATCC 51530 / DSM 4299 / JCM 9571 / NBRC 15438 / GSS1).